Here is a 119-residue protein sequence, read N- to C-terminus: MARVKRGVTTHARHKKVLEQSKGFRGRSSTNYRIALERLEKALRYAYRDRRNKKRDFRALWIQRINAAVREHGLTYSKFIFGLDKAGIEIDRKVLAAIAFDDAATFAEIVKKAQAALAA.

Belongs to the bacterial ribosomal protein bL20 family.

In terms of biological role, binds directly to 23S ribosomal RNA and is necessary for the in vitro assembly process of the 50S ribosomal subunit. It is not involved in the protein synthesizing functions of that subunit. The chain is Large ribosomal subunit protein bL20 from Gluconacetobacter diazotrophicus (strain ATCC 49037 / DSM 5601 / CCUG 37298 / CIP 103539 / LMG 7603 / PAl5).